The sequence spans 357 residues: NADH-quinone oxidoreductase subunit H (357 aa).

8 helical membrane-spanning segments follow: residues 26–46 (LVKIIAVVAPLMGAVAYLTLW), 92–112 (ALFVIAPIMTIMPALAAWAVI), 127–147 (LLFVMAITSLEVYGVIVAGWA), 164–184 (MISYEIAMGFVLVIILMVTGS), 203–223 (GLTFLSWNWLPLLPMFFIYII), 259–279 (FFLAEYANMWLISIMATLMFL), 294–314 (VPGWIWLGLKTLMVVTMFIWF), and 329–349 (LGWKVFIPLTLVYLLIVAIWM).

It belongs to the complex I subunit 1 family. As to quaternary structure, NDH-1 is composed of 14 different subunits. Subunits NuoA, H, J, K, L, M, N constitute the membrane sector of the complex.

The protein localises to the cell inner membrane. It carries out the reaction a quinone + NADH + 5 H(+)(in) = a quinol + NAD(+) + 4 H(+)(out). Its function is as follows. NDH-1 shuttles electrons from NADH, via FMN and iron-sulfur (Fe-S) centers, to quinones in the respiratory chain. The immediate electron acceptor for the enzyme in this species is believed to be ubiquinone. Couples the redox reaction to proton translocation (for every two electrons transferred, four hydrogen ions are translocated across the cytoplasmic membrane), and thus conserves the redox energy in a proton gradient. This subunit may bind ubiquinone. The chain is NADH-quinone oxidoreductase subunit H from Janthinobacterium sp. (strain Marseille) (Minibacterium massiliensis).